Consider the following 301-residue polypeptide: Probable alpha-L-glutamate ligase (301 aa).

The ATP-grasp domain maps to Leu104 to Glu287. ATP is bound by residues Lys141, Glu178 to Tyr179, Asp187, and Arg211 to Asn213. Residues Asp248, Glu260, and Asn262 each contribute to the Mg(2+) site. Positions 248, 260, and 262 each coordinate Mn(2+).

This sequence belongs to the RimK family. The cofactor is Mg(2+). It depends on Mn(2+) as a cofactor.

This chain is Probable alpha-L-glutamate ligase, found in Pseudomonas putida (strain GB-1).